The following is a 431-amino-acid chain: Dihydroorotase (431 aa).

The Zn(2+) site is built by H55 and H57. Substrate is bound by residues H57–R59 and N89. Positions 139, 169, 223, and 290 each coordinate Zn(2+). K139 bears the N6-carboxylysine mark. Residue D290 is part of the active site. Residues H294 and P308–G309 contribute to the substrate site.

Belongs to the metallo-dependent hydrolases superfamily. DHOase family. Class I DHOase subfamily. The cofactor is Zn(2+).

It carries out the reaction (S)-dihydroorotate + H2O = N-carbamoyl-L-aspartate + H(+). The protein operates within pyrimidine metabolism; UMP biosynthesis via de novo pathway; (S)-dihydroorotate from bicarbonate: step 3/3. In terms of biological role, catalyzes the reversible cyclization of carbamoyl aspartate to dihydroorotate. This Methanothermobacter thermautotrophicus (strain ATCC 29096 / DSM 1053 / JCM 10044 / NBRC 100330 / Delta H) (Methanobacterium thermoautotrophicum) protein is Dihydroorotase.